Consider the following 167-residue polypeptide: Interferon gamma (167 aa).

A signal peptide spans 1-23 (MNYTSFIFAFQLCIILCSSGYYC). Pyrrolidone carboxylic acid is present on glutamine 24. Residues asparagine 39 and asparagine 107 are each glycosylated (N-linked (GlcNAc...) asparagine).

The protein belongs to the type II (or gamma) interferon family. As to quaternary structure, homodimer. Interacts with IFNGR1 (via extracellular domain); this interaction promotes IFNGR1 dimerization. Released primarily from activated T lymphocytes.

The protein localises to the secreted. In terms of biological role, type II interferon produced by immune cells such as T-cells and NK cells that plays crucial roles in antimicrobial, antiviral, and antitumor responses by activating effector immune cells and enhancing antigen presentation. Primarily signals through the JAK-STAT pathway after interaction with its receptor IFNGR1 to affect gene regulation. Upon IFNG binding, IFNGR1 intracellular domain opens out to allow association of downstream signaling components JAK2, JAK1 and STAT1, leading to STAT1 activation, nuclear translocation and transcription of IFNG-regulated genes. Many of the induced genes are transcription factors such as IRF1 that are able to further drive regulation of a next wave of transcription. Plays a role in class I antigen presentation pathway by inducing a replacement of catalytic proteasome subunits with immunoproteasome subunits. In turn, increases the quantity, quality, and repertoire of peptides for class I MHC loading. Increases the efficiency of peptide generation also by inducing the expression of activator PA28 that associates with the proteasome and alters its proteolytic cleavage preference. Up-regulates as well MHC II complexes on the cell surface by promoting expression of several key molecules such as cathepsins B/CTSB, H/CTSH, and L/CTSL. Participates in the regulation of hematopoietic stem cells during development and under homeostatic conditions by affecting their development, quiescence, and differentiation. The sequence is that of Interferon gamma (IFNG) from Felis catus (Cat).